The sequence spans 599 residues: Putative sensor histidine kinase NtrY-like (599 aa).

A run of 4 helical transmembrane segments spans residues 17 to 37, 44 to 64, 85 to 105, and 285 to 305; these read ILILALAISAIVSACTTFYVI, FSTIIGFLLIDLAIFLILGIL, IVIAFSLVAAIPTIIVSVFSV, and IMFIFIALLLLFVAINFGVLF. One can recognise an HAMP domain in the interval 307–361; that stretch reads AQIVKPIKKLVTATDKVKDGDLTVQVPENEVDKDEIGTLYVAFNRMIKQLSRQQR. A Histidine kinase domain is found at 378 to 589; sequence KVAHEIKNPL…IIDIKFDLKE (212 aa). H381 carries the phosphohistidine; by autocatalysis modification.

It is found in the cell membrane. It catalyses the reaction ATP + protein L-histidine = ADP + protein N-phospho-L-histidine.. Functionally, member of the two-component regulatory system RT0603/RT0550. This chain is Putative sensor histidine kinase NtrY-like, found in Rickettsia typhi (strain ATCC VR-144 / Wilmington).